Consider the following 212-residue polypeptide: Pyridoxine/pyridoxamine 5'-phosphate oxidase (212 aa).

FMN is bound by residues 57–62 (RMVLLK), 72–73 (YT), arginine 78, lysine 79, and glutamine 101. Residue lysine 62 coordinates substrate. Positions 119, 123, and 127 each coordinate substrate. FMN-binding positions include 136 to 137 (QS) and tryptophan 181. Residue 187–189 (RLH) coordinates substrate. Arginine 191 contacts FMN.

The protein belongs to the pyridoxamine 5'-phosphate oxidase family. As to quaternary structure, homodimer. Requires FMN as cofactor.

It catalyses the reaction pyridoxamine 5'-phosphate + O2 + H2O = pyridoxal 5'-phosphate + H2O2 + NH4(+). The enzyme catalyses pyridoxine 5'-phosphate + O2 = pyridoxal 5'-phosphate + H2O2. It participates in cofactor metabolism; pyridoxal 5'-phosphate salvage; pyridoxal 5'-phosphate from pyridoxamine 5'-phosphate: step 1/1. Its pathway is cofactor metabolism; pyridoxal 5'-phosphate salvage; pyridoxal 5'-phosphate from pyridoxine 5'-phosphate: step 1/1. Its function is as follows. Catalyzes the oxidation of either pyridoxine 5'-phosphate (PNP) or pyridoxamine 5'-phosphate (PMP) into pyridoxal 5'-phosphate (PLP). In Erythrobacter litoralis (strain HTCC2594), this protein is Pyridoxine/pyridoxamine 5'-phosphate oxidase.